The primary structure comprises 754 residues: Endothelin-converting enzyme 1 (754 aa).

Residues 1–52 (MMSTYKRATLDEEDLVDSLSEGEVYPNGLQVNFRNFRSSQRCWATRTQVEKR) are Cytoplasmic-facing. At Thr9 the chain carries Phosphothreonine. A helical; Signal-anchor for type II membrane protein transmembrane segment spans residues 53-73 (LIVLVALLAAGLVACLTALGI). Residues 74-754 (QYRTRTPPVC…MNPRHKCEVW (681 aa)) lie on the Extracellular side of the membrane. The Peptidase M13 domain occupies 82 to 754 (VCLSEACVSV…MNPRHKCEVW (673 aa)). 5 disulfide bridges follow: Cys83–Cys88, Cys106–Cys739, Cys114–Cys699, Cys169–Cys419, and Cys628–Cys751. N-linked (GlcNAc...) asparagine glycans are attached at residues Asn150, Asn171, Asn194, Asn254, Asn300, Asn346, Asn367, and Asn523. Zn(2+) is bound at residue His591. Glu592 is a catalytic residue. His595 provides a ligand contact to Zn(2+). Asn616 and Asn635 each carry an N-linked (GlcNAc...) asparagine glycan. A Zn(2+)-binding site is contributed by Glu651. The Proton donor role is filled by Asp655.

This sequence belongs to the peptidase M13 family. As to quaternary structure, homodimer; disulfide-linked. Interacts with PPP1R16B. Interacts with TSPAN8; this interaction recruits the endothelin converting enzyme ECE1 to tetraspanin-enriched microdomains and positively modulates its enzymatic activity. Requires Zn(2+) as cofactor.

The protein resides in the cell membrane. It catalyses the reaction Hydrolysis of the 21-Trp-|-Val-22 bond in big endothelin to form endothelin 1.. Its activity is regulated as follows. Inhibited by phosphoramidon. Converts big endothelin-1 to endothelin-1. This chain is Endothelin-converting enzyme 1 (ECE1), found in Cavia porcellus (Guinea pig).